We begin with the raw amino-acid sequence, 208 residues long: Non-specific lipid transfer protein GPI-anchored 4 (208 aa).

A signal peptide spans Met-1 to Ala-25. N-linked (GlcNAc...) asparagine glycans are attached at residues Asn-27, Asn-67, and Asn-105. 4 cysteine pairs are disulfide-bonded: Cys-48–Cys-91, Cys-58–Cys-75, Cys-76–Cys-116, and Cys-89–Cys-125. Positions Gly-136–Gly-181 are disordered. The GPI-anchor amidated serine moiety is linked to residue Ser-179. Positions Ser-180 to Asn-208 are cleaved as a propeptide — removed in mature form.

This sequence belongs to the plant LTP family. Confined to the anthers and stamen of the inflorescence, especially in pollen.

The protein localises to the cell membrane. Its function is as follows. Lipid transfer protein involved in seed and ovule maturation and development, probably by regulating the fatty acids homeostasis during suberin and sporopollenin biosynthesis or deposition. This chain is Non-specific lipid transfer protein GPI-anchored 4, found in Arabidopsis thaliana (Mouse-ear cress).